Consider the following 381-residue polypeptide: Bifunctional enzyme Fae/Hps (381 aa).

The formaldehyde-activating enzyme stretch occupies residues 1–150; that stretch reads MIKFGEAVLG…KEKYRALHPL (150 aa). The 3-hexulose-6-phosphate synthase stretch occupies residues 151–381; that stretch reads VGFRDVRLEY…DEDEDIGEEL (231 aa).

In the N-terminal section; belongs to the formaldehyde-activating enzyme family. This sequence in the C-terminal section; belongs to the HPS/KGPDC family. HPS subfamily.

The catalysed reaction is 5,6,7,8-tetrahydromethanopterin + formaldehyde = 5,10-methylenetetrahydromethanopterin + H2O. The enzyme catalyses D-ribulose 5-phosphate + formaldehyde = D-arabino-hex-3-ulose 6-phosphate. It functions in the pathway carbohydrate biosynthesis; D-ribose 5-phosphate biosynthesis. Catalyzes the condensation of formaldehyde with tetrahydromethanopterin (H(4)MPT) to 5,10-methylenetetrahydromethanopterin. Functionally, catalyzes the reversible formation of ribulose-5-phosphate and formaldehyde from 3-hexulose-6-phosphate. In Methanocaldococcus jannaschii (strain ATCC 43067 / DSM 2661 / JAL-1 / JCM 10045 / NBRC 100440) (Methanococcus jannaschii), this protein is Bifunctional enzyme Fae/Hps.